A 157-amino-acid polypeptide reads, in one-letter code: Peptide methionine sulfoxide reductase MsrA (157 aa).

Residue C10 is part of the active site.

It belongs to the MsrA Met sulfoxide reductase family.

The catalysed reaction is L-methionyl-[protein] + [thioredoxin]-disulfide + H2O = L-methionyl-(S)-S-oxide-[protein] + [thioredoxin]-dithiol. It carries out the reaction [thioredoxin]-disulfide + L-methionine + H2O = L-methionine (S)-S-oxide + [thioredoxin]-dithiol. Functionally, has an important function as a repair enzyme for proteins that have been inactivated by oxidation. Catalyzes the reversible oxidation-reduction of methionine sulfoxide in proteins to methionine. The chain is Peptide methionine sulfoxide reductase MsrA from Clostridium botulinum (strain Hall / ATCC 3502 / NCTC 13319 / Type A).